Consider the following 224-residue polypeptide: MDKQQLAKMIDHTILKPEADKASIEKLCKEALEYNFASVCINPTNVELAAKLLKGSEVKVCTVIGFPLGANTMEVKAFETKDAIAKGADEVDMVINIGRLKDKDYEYVEKDIKAVVDAADKKAVTKVIIETCLLTEEEKVKACELAKKAGADFVKTSTGFSTGGATPEDIKLMRETVGPDMGVKASGGVRSIEDAEAVIKNGATRIGASASIAICEGKVSDSTY.

D92 functions as the Proton donor/acceptor in the catalytic mechanism. K155 acts as the Schiff-base intermediate with acetaldehyde in catalysis. The active-site Proton donor/acceptor is K184.

It belongs to the DeoC/FbaB aldolase family. DeoC type 1 subfamily.

The protein resides in the cytoplasm. The catalysed reaction is 2-deoxy-D-ribose 5-phosphate = D-glyceraldehyde 3-phosphate + acetaldehyde. The protein operates within carbohydrate degradation; 2-deoxy-D-ribose 1-phosphate degradation; D-glyceraldehyde 3-phosphate and acetaldehyde from 2-deoxy-alpha-D-ribose 1-phosphate: step 2/2. Its function is as follows. Catalyzes a reversible aldol reaction between acetaldehyde and D-glyceraldehyde 3-phosphate to generate 2-deoxy-D-ribose 5-phosphate. This Clostridium perfringens (strain SM101 / Type A) protein is Deoxyribose-phosphate aldolase.